The sequence spans 418 residues: NADH-quinone oxidoreductase subunit D (418 aa).

It belongs to the complex I 49 kDa subunit family. NDH-1 is composed of 14 different subunits. Subunits NuoB, C, D, E, F, and G constitute the peripheral sector of the complex.

It localises to the cell inner membrane. The catalysed reaction is a quinone + NADH + 5 H(+)(in) = a quinol + NAD(+) + 4 H(+)(out). Functionally, NDH-1 shuttles electrons from NADH, via FMN and iron-sulfur (Fe-S) centers, to quinones in the respiratory chain. The immediate electron acceptor for the enzyme in this species is believed to be ubiquinone. Couples the redox reaction to proton translocation (for every two electrons transferred, four hydrogen ions are translocated across the cytoplasmic membrane), and thus conserves the redox energy in a proton gradient. The protein is NADH-quinone oxidoreductase subunit D of Neisseria gonorrhoeae (strain ATCC 700825 / FA 1090).